The primary structure comprises 574 residues: MLSKFYEDIDSKLENAMLSQIESSTITCDGKSLNTLPTPKQEDVEFGVPLQPEDTQDLQRKLKPRHMQMIAIGGCVGTGLFVGSGNALADGGPASILIAFAVIGTYVLFTTSALAELSAIYPVSGSFYTYFSKFIDPAWGFAVGIQYWLSFAVTVPLELTVAPLIINFWNASGPVSIWISVFYVIIIAINIWGTEGYGEVEFFLSIMKVISVIGFVILSIIIAAGGVPTDDRGVIGVSYWKQPLVFNNGFKGLCAVSVIAIFSLSGTELVGLAASEAKNPQKTVPAAVKQIFWRIFLFYIVALFMLTLVVPSDLPGLRTSDNSNVLISPFVIAIQLANIRALPSIMNVVILLSTLSVGNSASYAASRALFALAKNGYAPKIFNKTNKRGHPIYAIAVTLLFGSIAYFTEAGVGGALFGWLLSICGLSTTFIWGSICLAHIQFRRAWKIQNRKLEDLPYRSIFGVYGSIYGVAMTILALIAQFYVAVFPIGKKPNPVDFFQAYMAAPILIISFVAWKFFRRTSFVRIEKIDLSEGAHGEQKQNLEPVINIPVEEIDFPMKVATKESMKNVEKNAL.

Transmembrane regions (helical) follow at residues 69–89 (MIAI…NALA), 94–114 (ASIL…TSAL), 173–193 (GPVS…NIWG), 202–222 (FFLS…SIII), 291–311 (IFWR…LVVP), 391–411 (PIYA…TEAG), 412–432 (VGGA…TFIW), 470–490 (GVAM…FPIG), and 498–518 (FFQA…WKFF).

This sequence belongs to the amino acid-polyamine-organocation (APC) superfamily.

The protein localises to the membrane. In Schizosaccharomyces pombe (strain 972 / ATCC 24843) (Fission yeast), this protein is Probable amino-acid permease meu22 (meu22).